The following is a 158-amino-acid chain: PTS system fructose-specific EIIB component (158 aa).

Residues 1–98 (MKLVAVTSCP…AEAVVQKAVE (98 aa)) enclose the PTS EIIB type-2 domain. Cys9 (phosphocysteine intermediate) is an active-site residue. Cys9 bears the Phosphocysteine; by EIIA mark. A disordered region spans residues 104–147 (KTGSVTFGSGDDGEDADVGADDSSDDADAAESDEPVRRGGDPEK). Residues 114–136 (DDGEDADVGADDSSDDADAAESD) are compositionally biased toward acidic residues. Basic and acidic residues predominate over residues 137–147 (EPVRRGGDPEK).

The protein localises to the cytoplasm. It catalyses the reaction D-fructose(out) + N(pros)-phospho-L-histidyl-[protein] = D-fructose 1-phosphate(in) + L-histidyl-[protein]. Its function is as follows. The phosphoenolpyruvate-dependent sugar phosphotransferase system (sugar PTS), a major carbohydrate active transport system, catalyzes the phosphorylation of incoming sugar substrates concomitantly with their translocation across the cell membrane. The enzyme II PtfABC PTS system is involved in fructose transport. The polypeptide is PTS system fructose-specific EIIB component (Haloferax volcanii (strain ATCC 29605 / DSM 3757 / JCM 8879 / NBRC 14742 / NCIMB 2012 / VKM B-1768 / DS2) (Halobacterium volcanii)).